Consider the following 254-residue polypeptide: Transmembrane protein 269 (254 aa).

5 helical membrane passes run Ile-44 to Phe-64, Tyr-69 to Thr-89, Leu-113 to Leu-135, Leu-171 to Ile-191, and Ile-210 to Tyr-230.

It is found in the membrane. This is Transmembrane protein 269 from Mus musculus (Mouse).